Reading from the N-terminus, the 166-residue chain is Cyclic pyranopterin monophosphate synthase (166 aa).

Substrate contacts are provided by residues 75–77 (MCH) and 115–116 (ME). Residue aspartate 130 is part of the active site.

This sequence belongs to the MoaC family. Homohexamer; trimer of dimers.

It carries out the reaction (8S)-3',8-cyclo-7,8-dihydroguanosine 5'-triphosphate = cyclic pyranopterin phosphate + diphosphate. Its pathway is cofactor biosynthesis; molybdopterin biosynthesis. In terms of biological role, catalyzes the conversion of (8S)-3',8-cyclo-7,8-dihydroguanosine 5'-triphosphate to cyclic pyranopterin monophosphate (cPMP). The protein is Cyclic pyranopterin monophosphate synthase of Shouchella clausii (strain KSM-K16) (Alkalihalobacillus clausii).